We begin with the raw amino-acid sequence, 71 residues long: Guanine nucleotide-binding protein G(I)/G(S)/G(O) subunit gamma-2 (71 aa).

The residue at position 2 (Ala-2) is an N-acetylalanine. A Cysteine methyl ester modification is found at Cys-68. Cys-68 is lipidated: S-geranylgeranyl cysteine. A propeptide spans 69-71 (AIL) (removed in mature form).

The protein belongs to the G protein gamma family. In terms of assembly, g proteins are composed of 3 units, alpha, beta and gamma. In this context, interacts with GNB2. The heterodimer formed by GNB1 and GNG2 interacts with ARHGEF5. The heterodimer formed by GNB1 and GNG2 interacts with GRK2. Component of the TAS2R14-GNAI1 complex, consisting of TAS2R14, GNAI1, GNB1 and GNG2. Forms complexes with TAS2R14 and G-proteins; these complexes play a role in the perception of bitterness. Component of the TAS2R14-GNAT3 complex, consisting of TAS2R14, GNAT3, GNB1 and GNG2. Component of the TAS2R14-GNAS2 complex, consisting of TAS2R14, GNAS2, GNB1 and GNG2. As to expression, adrenal gland and brain.

Its subcellular location is the cell membrane. Its function is as follows. Guanine nucleotide-binding proteins (G proteins) are involved as a modulator or transducer in various transmembrane signaling systems. The beta and gamma chains are required for the GTPase activity, for replacement of GDP by GTP, and for G protein-effector interaction. This chain is Guanine nucleotide-binding protein G(I)/G(S)/G(O) subunit gamma-2 (GNG2), found in Bos taurus (Bovine).